Reading from the N-terminus, the 262-residue chain is Hydroxyethylthiazole kinase (262 aa).

Substrate is bound at residue M50. Residues R125 and T171 each contribute to the ATP site. Residue G198 coordinates substrate.

This sequence belongs to the Thz kinase family. Mg(2+) is required as a cofactor.

It carries out the reaction 5-(2-hydroxyethyl)-4-methylthiazole + ATP = 4-methyl-5-(2-phosphooxyethyl)-thiazole + ADP + H(+). Its pathway is cofactor biosynthesis; thiamine diphosphate biosynthesis; 4-methyl-5-(2-phosphoethyl)-thiazole from 5-(2-hydroxyethyl)-4-methylthiazole: step 1/1. In terms of biological role, catalyzes the phosphorylation of the hydroxyl group of 4-methyl-5-beta-hydroxyethylthiazole (THZ). In Citrobacter koseri (strain ATCC BAA-895 / CDC 4225-83 / SGSC4696), this protein is Hydroxyethylthiazole kinase.